The following is a 332-amino-acid chain: Transaldolase (332 aa).

Catalysis depends on lysine 135, which acts as the Schiff-base intermediate with substrate.

Belongs to the transaldolase family. Type 1 subfamily. As to quaternary structure, homodimer.

Its subcellular location is the cytoplasm. It catalyses the reaction D-sedoheptulose 7-phosphate + D-glyceraldehyde 3-phosphate = D-erythrose 4-phosphate + beta-D-fructose 6-phosphate. It functions in the pathway carbohydrate degradation; pentose phosphate pathway; D-glyceraldehyde 3-phosphate and beta-D-fructose 6-phosphate from D-ribose 5-phosphate and D-xylulose 5-phosphate (non-oxidative stage): step 2/3. Transaldolase is important for the balance of metabolites in the pentose-phosphate pathway. The protein is Transaldolase of Prochlorococcus marinus (strain NATL1A).